Consider the following 483-residue polypeptide: Glutamyl-tRNA(Gln) amidotransferase subunit A (483 aa).

Active-site charge relay system residues include lysine 76 and serine 151. Serine 175 acts as the Acyl-ester intermediate in catalysis.

It belongs to the amidase family. GatA subfamily. Heterotrimer of A, B and C subunits.

The catalysed reaction is L-glutamyl-tRNA(Gln) + L-glutamine + ATP + H2O = L-glutaminyl-tRNA(Gln) + L-glutamate + ADP + phosphate + H(+). Its function is as follows. Allows the formation of correctly charged Gln-tRNA(Gln) through the transamidation of misacylated Glu-tRNA(Gln) in organisms which lack glutaminyl-tRNA synthetase. The reaction takes place in the presence of glutamine and ATP through an activated gamma-phospho-Glu-tRNA(Gln). The polypeptide is Glutamyl-tRNA(Gln) amidotransferase subunit A (Chromobacterium violaceum (strain ATCC 12472 / DSM 30191 / JCM 1249 / CCUG 213 / NBRC 12614 / NCIMB 9131 / NCTC 9757 / MK)).